Here is an 830-residue protein sequence, read N- to C-terminus: Probable glucan 1,3-beta-glucosidase D (830 aa).

Over residues 1–34 the composition is skewed to basic and acidic residues; the sequence is MPSQSRSRDRYRGRDTEYTRRRYPDEHDYSHDDH. A disordered region spans residues 1 to 279; that stretch reads MPSQSRSRDR…PPMDARWPKG (279 aa). Topologically, residues 1–301 are cytoplasmic; it reads MPSQSRSRDR…GRPFWKQKKW (301 aa). Residues 35–51 show a composition bias toward acidic residues; that stretch reads DYDYDDDDDDNDDLEQD. 2 stretches are compositionally biased toward basic and acidic residues: residues 52–98 and 110–175; these read VTER…ERRR and QHRE…KHQS. Over residues 181-194 the composition is skewed to low complexity; the sequence is SASHLLSADALARL. 3 stretches are compositionally biased toward basic and acidic residues: residues 198-215, 228-243, and 253-264; these read YEKEDRRERAHAKDAAKA, EQERGLRAEKPRDRSR, and EEGRGPEMEFRR. The helical; Signal-anchor for type II membrane protein transmembrane segment at 302-322 threads the bilayer; the sequence is LIGIGVVILILVIVIPVAVVV. Over 323–830 the chain is Extracellular; the sequence is SKKHNDKPNA…PDFGSLPEYY (508 aa). The tract at residues 327 to 351 is disordered; it reads NDKPNATTTQPDGTTPSNSNLDGLS. A compositionally biased stretch (polar residues) spans 330–348; that stretch reads PNATTTQPDGTTPSNSNLD. 6 N-linked (GlcNAc...) asparagine glycosylation sites follow: asparagine 331, asparagine 376, asparagine 381, asparagine 393, asparagine 546, and asparagine 558. Glutamate 597 functions as the Proton donor in the catalytic mechanism. 4 N-linked (GlcNAc...) asparagine glycosylation sites follow: asparagine 610, asparagine 636, asparagine 669, and asparagine 689. Glutamate 701 serves as the catalytic Nucleophile.

This sequence belongs to the glycosyl hydrolase 5 (cellulase A) family.

It is found in the cell membrane. It catalyses the reaction Successive hydrolysis of beta-D-glucose units from the non-reducing ends of (1-&gt;3)-beta-D-glucans, releasing alpha-glucose.. Its function is as follows. Glucosidase involved in the degradation of cellulosic biomass. Active on lichenan. This is Probable glucan 1,3-beta-glucosidase D (exgD) from Aspergillus clavatus (strain ATCC 1007 / CBS 513.65 / DSM 816 / NCTC 3887 / NRRL 1 / QM 1276 / 107).